A 220-amino-acid polypeptide reads, in one-letter code: Ribose-5-phosphate isomerase A (220 aa).

Residues 29–32 (TGST), 82–85 (DGCD), and 95–98 (KGGG) each bind substrate. Glu-104 serves as the catalytic Proton acceptor. Lys-122 provides a ligand contact to substrate.

It belongs to the ribose 5-phosphate isomerase family. As to quaternary structure, homodimer.

It carries out the reaction aldehydo-D-ribose 5-phosphate = D-ribulose 5-phosphate. Its pathway is carbohydrate degradation; pentose phosphate pathway; D-ribose 5-phosphate from D-ribulose 5-phosphate (non-oxidative stage): step 1/1. Functionally, catalyzes the reversible conversion of ribose-5-phosphate to ribulose 5-phosphate. This Laribacter hongkongensis (strain HLHK9) protein is Ribose-5-phosphate isomerase A.